A 453-amino-acid polypeptide reads, in one-letter code: MEHVISMEEILGPFWELLPPPAPEPEREQPPVTGIVVGSVIDVAAAGHGDGDMMDQQHATEWTFERLLEEEALTTSTPPPVVVVPNSCCSGALNADRPPVMEEAVTMAPAAVSSAVVGDPMEYNAILRRKLEEDLEAFKMWRADSSVVTSDQRSQGSNNHTGGSSIRNNPVQNKLMNGEDPINNNHAQTAGLGVRLATSSSSRDPSPSDEDMDGEVEILGFKMPTEERVRKKESNRESARRSRYRKAAHLKELEDQVAQLKAENSCLLRRIAALNQKYNDANVDNRVLRADMETLRAKVKMGEDSLKRVIEMSSSVPSSMPISAPTPSSDAPVPPPPIRDSIVGYFSATAADDDASVGNGFLRLQAHQEPASMVVGGTLSATEMNRVAAATHCAGAMELIQTAMGSMPPTSASGSTPPPQIMSCWVQMGPYTWTCIRHCGFRDRWEHFICRRR.

The segment at 145–243 (SSVVTSDQRS…SNRESARRSR (99 aa)) is disordered. Polar residues predominate over residues 146 to 175 (SVVTSDQRSQGSNNHTGGSSIRNNPVQNKL). The span at 207 to 216 (PSDEDMDGEV) shows a compositional bias: acidic residues. The span at 224 to 240 (PTEERVRKKESNRESAR) shows a compositional bias: basic and acidic residues. The bZIP domain occupies 225-288 (TEERVRKKES…NDANVDNRVL (64 aa)). A basic motif region spans residues 228–251 (RVRKKESNRESARRSRYRKAAHLK). Residues 253–274 (LEDQVAQLKAENSCLLRRIAAL) are leucine-zipper.

This sequence belongs to the bZIP family. In terms of assembly, interacts with the Dof zinc finger protein PBF. As to expression, seed endosperm.

Its subcellular location is the nucleus. Functionally, involved in the regulation of the endosperm-specific production of albumin b-32 and other zein proteins. It is a trans-acting transcriptional activator that binds to the consensus sequence 5'-GATGAYRTGR-3'. This is Regulatory protein opaque-2 (O2) from Zea mays (Maize).